The primary structure comprises 442 residues: Histidine--tRNA ligase (442 aa).

The interval 416 to 442 (SGDETTVPVEEFPPEGGEELPTYEDYE) is disordered. Positions 427–442 (FPPEGGEELPTYEDYE) are enriched in acidic residues.

It belongs to the class-II aminoacyl-tRNA synthetase family.

It is found in the cytoplasm. It catalyses the reaction tRNA(His) + L-histidine + ATP = L-histidyl-tRNA(His) + AMP + diphosphate + H(+). The polypeptide is Histidine--tRNA ligase (Halorubrum lacusprofundi (strain ATCC 49239 / DSM 5036 / JCM 8891 / ACAM 34)).